An 860-amino-acid polypeptide reads, in one-letter code: Rod cGMP-specific 3',5'-cyclic phosphodiesterase subunit alpha (860 aa).

Gly2 carries the N-acetylglycine modification. 2 consecutive GAF domains span residues 73–222 (QTEK…NLIM) and 254–431 (DIER…GWSV). The region spanning 483 to 816 (EEEELAEILQ…KEWKALADEY (334 aa)) is the PDEase domain. The Proton donor role is filled by His559. His563, His599, Asp600, and Asp720 together coordinate a divalent metal cation. The interval 821–860 (KVQEEKKQKQQSAKSAAAGNQPGGNPSPGGATTSKSCCIQ) is disordered. The segment covering 830-851 (QQSAKSAAAGNQPGGNPSPGGA) has biased composition (low complexity). At Cys857 the chain carries Cysteine methyl ester. Cys857 carries the S-farnesyl cysteine lipid modification. Residues 858 to 860 (CIQ) constitute a propeptide, removed in mature form.

It belongs to the cyclic nucleotide phosphodiesterase family. In terms of assembly, oligomer composed of two catalytic chains (alpha and beta), an inhibitory chain (gamma) and the delta chain. A divalent metal cation serves as cofactor.

The protein resides in the cell membrane. It localises to the cell projection. It is found in the cilium. Its subcellular location is the photoreceptor outer segment. It carries out the reaction 3',5'-cyclic GMP + H2O = GMP + H(+). Rod-specific cGMP phosphodiesterase that catalyzes the hydrolysis of 3',5'-cyclic GMP. This protein participates in processes of transmission and amplification of the visual signal. In Homo sapiens (Human), this protein is Rod cGMP-specific 3',5'-cyclic phosphodiesterase subunit alpha.